Reading from the N-terminus, the 177-residue chain is ATP synthase subunit delta (177 aa).

Belongs to the ATPase delta chain family. In terms of assembly, F-type ATPases have 2 components, F(1) - the catalytic core - and F(0) - the membrane proton channel. F(1) has five subunits: alpha(3), beta(3), gamma(1), delta(1), epsilon(1). F(0) has three main subunits: a(1), b(2) and c(10-14). The alpha and beta chains form an alternating ring which encloses part of the gamma chain. F(1) is attached to F(0) by a central stalk formed by the gamma and epsilon chains, while a peripheral stalk is formed by the delta and b chains.

The protein resides in the cell inner membrane. In terms of biological role, f(1)F(0) ATP synthase produces ATP from ADP in the presence of a proton or sodium gradient. F-type ATPases consist of two structural domains, F(1) containing the extramembraneous catalytic core and F(0) containing the membrane proton channel, linked together by a central stalk and a peripheral stalk. During catalysis, ATP synthesis in the catalytic domain of F(1) is coupled via a rotary mechanism of the central stalk subunits to proton translocation. This protein is part of the stalk that links CF(0) to CF(1). It either transmits conformational changes from CF(0) to CF(1) or is implicated in proton conduction. The polypeptide is ATP synthase subunit delta (Klebsiella pneumoniae (strain 342)).